Here is a 354-residue protein sequence, read N- to C-terminus: D-alanine--D-alanine ligase (354 aa).

The 206-residue stretch at Lys133–Glu338 folds into the ATP-grasp domain. Glu166–Glu221 contributes to the ATP binding site. The Mg(2+) site is built by Asp292, Glu305, and Asn307.

Belongs to the D-alanine--D-alanine ligase family. Mg(2+) serves as cofactor. It depends on Mn(2+) as a cofactor.

Its subcellular location is the cytoplasm. The enzyme catalyses 2 D-alanine + ATP = D-alanyl-D-alanine + ADP + phosphate + H(+). It functions in the pathway cell wall biogenesis; peptidoglycan biosynthesis. In terms of biological role, cell wall formation. The chain is D-alanine--D-alanine ligase from Bacillus velezensis (strain DSM 23117 / BGSC 10A6 / LMG 26770 / FZB42) (Bacillus amyloliquefaciens subsp. plantarum).